Here is a 468-residue protein sequence, read N- to C-terminus: ATP synthase subunit beta 1 (468 aa).

Gly-151 to Thr-158 is an ATP binding site.

This sequence belongs to the ATPase alpha/beta chains family. F-type ATPases have 2 components, CF(1) - the catalytic core - and CF(0) - the membrane proton channel. CF(1) has five subunits: alpha(3), beta(3), gamma(1), delta(1), epsilon(1). CF(0) has three main subunits: a(1), b(2) and c(9-12). The alpha and beta chains form an alternating ring which encloses part of the gamma chain. CF(1) is attached to CF(0) by a central stalk formed by the gamma and epsilon chains, while a peripheral stalk is formed by the delta and b chains.

It is found in the cell inner membrane. The catalysed reaction is ATP + H2O + 4 H(+)(in) = ADP + phosphate + 5 H(+)(out). Functionally, produces ATP from ADP in the presence of a proton gradient across the membrane. The catalytic sites are hosted primarily by the beta subunits. This is ATP synthase subunit beta 1 from Photobacterium profundum (strain SS9).